Reading from the N-terminus, the 591-residue chain is UvrABC system protein C (591 aa).

The 78-residue stretch at 14 to 91 (DSPGCYLHKD…IQKNMPKYNI (78 aa)) folds into the GIY-YIG domain. The region spanning 196–231 (DKIVTGLKEKMLAASQAMEFERAAEYRDLISGIATL) is the UVR domain.

This sequence belongs to the UvrC family. Interacts with UvrB in an incision complex.

The protein resides in the cytoplasm. The UvrABC repair system catalyzes the recognition and processing of DNA lesions. UvrC both incises the 5' and 3' sides of the lesion. The N-terminal half is responsible for the 3' incision and the C-terminal half is responsible for the 5' incision. The polypeptide is UvrABC system protein C (Streptococcus uberis (strain ATCC BAA-854 / 0140J)).